A 157-amino-acid polypeptide reads, in one-letter code: Small ribosomal subunit protein uS7 (157 aa).

This sequence belongs to the universal ribosomal protein uS7 family. Part of the 30S ribosomal subunit. Contacts proteins S9 and S11.

In terms of biological role, one of the primary rRNA binding proteins, it binds directly to 16S rRNA where it nucleates assembly of the head domain of the 30S subunit. Is located at the subunit interface close to the decoding center, probably blocks exit of the E-site tRNA. The protein is Small ribosomal subunit protein uS7 of Chlamydia caviae (strain ATCC VR-813 / DSM 19441 / 03DC25 / GPIC) (Chlamydophila caviae).